The following is a 404-amino-acid chain: Na(+)/H(+) antiporter NhaA 2 (404 aa).

11 helical membrane-spanning segments follow: residues 24–44 (GIIL…SFSG), 67–87 (VLHW…GMEI), 103–123 (ILPI…YALF), 132–152 (GWGI…SLVA), 161–181 (VFLT…IAIF), 184–204 (SQIS…LILA), 216–236 (IILG…ATIA), 266–286 (TPWS…GIII), 303–323 (IIFG…FILI), 339–359 (LYGA…VSSL), and 372–392 (MCIM…FKFI).

Belongs to the NhaA Na(+)/H(+) (TC 2.A.33) antiporter family.

Its subcellular location is the cell membrane. The catalysed reaction is Na(+)(in) + 2 H(+)(out) = Na(+)(out) + 2 H(+)(in). Functionally, na(+)/H(+) antiporter that extrudes sodium in exchange for external protons. The chain is Na(+)/H(+) antiporter NhaA 2 from Clostridium beijerinckii (strain ATCC 51743 / NCIMB 8052) (Clostridium acetobutylicum).